The primary structure comprises 45 residues: Large ribosomal subunit protein bL36 (45 aa).

The tract at residues 1–45 (MKVSSSIKADPSKGDKLVRRKGRLYVINKKDPNRKQRQAGPARKK) is disordered.

Belongs to the bacterial ribosomal protein bL36 family.

In Chlamydia caviae (strain ATCC VR-813 / DSM 19441 / 03DC25 / GPIC) (Chlamydophila caviae), this protein is Large ribosomal subunit protein bL36.